The primary structure comprises 307 residues: UDP-3-O-acyl-N-acetylglucosamine deacetylase (307 aa).

Residues His78, His235, and Asp239 each coordinate Zn(2+). His262 functions as the Proton donor in the catalytic mechanism.

It belongs to the LpxC family. It depends on Zn(2+) as a cofactor.

The enzyme catalyses a UDP-3-O-[(3R)-3-hydroxyacyl]-N-acetyl-alpha-D-glucosamine + H2O = a UDP-3-O-[(3R)-3-hydroxyacyl]-alpha-D-glucosamine + acetate. The protein operates within glycolipid biosynthesis; lipid IV(A) biosynthesis; lipid IV(A) from (3R)-3-hydroxytetradecanoyl-[acyl-carrier-protein] and UDP-N-acetyl-alpha-D-glucosamine: step 2/6. Its function is as follows. Catalyzes the hydrolysis of UDP-3-O-myristoyl-N-acetylglucosamine to form UDP-3-O-myristoylglucosamine and acetate, the committed step in lipid A biosynthesis. This chain is UDP-3-O-acyl-N-acetylglucosamine deacetylase, found in Geotalea uraniireducens (strain Rf4) (Geobacter uraniireducens).